Here is a 252-residue protein sequence, read N- to C-terminus: 2,5-diamino-6-ribosylamino-4(3H)-pyrimidinone 5'-phosphate reductase (252 aa).

Residues T80, D84, V166, and 189 to 193 contribute to the NADP(+) site; that span reads GGIVI.

It belongs to the HTP reductase family. In terms of assembly, homodimer.

The enzyme catalyses 2,5-diamino-6-(1-D-ribitylamino)pyrimidin-4(3H)-one 5'-phosphate + NADP(+) = 2,5-diamino-6-(1-D-ribosylamino)pyrimidin-4(3H)-one 5'-phosphate + NADPH + H(+). The catalysed reaction is 2,5-diamino-6-(1-D-ribitylamino)pyrimidin-4(3H)-one 5'-phosphate + NAD(+) = 2,5-diamino-6-(1-D-ribosylamino)pyrimidin-4(3H)-one 5'-phosphate + NADH + H(+). It functions in the pathway cofactor biosynthesis; riboflavin biosynthesis. In terms of biological role, catalyzes an early step in riboflavin biosynthesis, the NADPH-dependent reduction of the ribose side chain of 2,5-diamino-6-ribosylamino-4(3H)-pyrimidinone 5'-phosphate, yielding 2,5-diamino-6-ribitylamino-4(3H)-pyrimidinone 5'-phosphate. This chain is 2,5-diamino-6-ribosylamino-4(3H)-pyrimidinone 5'-phosphate reductase (RIB7), found in Kluyveromyces lactis (strain ATCC 8585 / CBS 2359 / DSM 70799 / NBRC 1267 / NRRL Y-1140 / WM37) (Yeast).